The primary structure comprises 360 residues: MKKLLALAVIAPLLISCSSSTKKGETYNEAWVKDTNGFDILMGQFANNIENLWGYKEVLIAGPKDYVKYTDQFQTRSHINFDDGTITVETIAGTEPTAHLRRAIIKTLLMGDDPTSVDLYSDVDDIKISKEPFLYGQVVDNTGQPIRWEGRATTFADYLLKTRLKSRSNGLRIIYSVTINLVPNHLDKRAHKYIGMVRQASRKYGVDESLILAIMQTESSFNPYAVSHADALGLMQVVQHSAGKDVFRSQGKSGIPSRNFLFDPASNIDTGTAYLAMLNNVYLSGIENPTSRRYAVITAYNGGAGSVLRVFSNDKIQAANMINRMSPGDVYQILTTRHPSAESRRYLYKVNSAQRAYRRR.

A signal peptide spans 1–16 (MKKLLALAVIAPLLIS). A lipid anchor (N-palmitoyl cysteine) is attached at Cys17. Cys17 carries the S-diacylglycerol cysteine lipid modification.

The protein belongs to the transglycosylase Slt family.

It localises to the cell outer membrane. The enzyme catalyses Exolytic cleavage of the (1-&gt;4)-beta-glycosidic linkage between N-acetylmuramic acid (MurNAc) and N-acetylglucosamine (GlcNAc) residues in peptidoglycan, from either the reducing or the non-reducing ends of the peptidoglycan chains, with concomitant formation of a 1,6-anhydrobond in the MurNAc residue.. Its function is as follows. Murein-degrading enzyme. May play a role in recycling of muropeptides during cell elongation and/or cell division. This is Membrane-bound lytic murein transglycosylase C from Salmonella arizonae (strain ATCC BAA-731 / CDC346-86 / RSK2980).